Reading from the N-terminus, the 127-residue chain is Putative pre-16S rRNA nuclease (127 aa).

It belongs to the YqgF nuclease family.

The protein localises to the cytoplasm. Its function is as follows. Could be a nuclease involved in processing of the 5'-end of pre-16S rRNA. This is Putative pre-16S rRNA nuclease from Campylobacter jejuni subsp. jejuni serotype O:23/36 (strain 81-176).